The primary structure comprises 467 residues: GTPase Obg (467 aa).

The Obg domain occupies 1–158 (MFYDEAKIFV…RWLRLELKLL (158 aa)). Residues 159–333 (ADVGLVGLPN…LIRATWERLQ (175 aa)) form the OBG-type G domain. GTP contacts are provided by residues 165 to 172 (GLPNAGKS), 190 to 194 (FTTLE), 214 to 217 (DLPG), 285 to 288 (NKMD), and 314 to 316 (SAA). Mg(2+) is bound by residues Ser-172 and Thr-192. Residues 352 to 430 (TLDRSQERWE…VAGRELVWEP (79 aa)) form the OCT domain.

This sequence belongs to the TRAFAC class OBG-HflX-like GTPase superfamily. OBG GTPase family. In terms of assembly, monomer. Mg(2+) serves as cofactor.

Its subcellular location is the cytoplasm. Its function is as follows. An essential GTPase which binds GTP, GDP and possibly (p)ppGpp with moderate affinity, with high nucleotide exchange rates and a fairly low GTP hydrolysis rate. Plays a role in control of the cell cycle, stress response, ribosome biogenesis and in those bacteria that undergo differentiation, in morphogenesis control. This Thermomicrobium roseum (strain ATCC 27502 / DSM 5159 / P-2) protein is GTPase Obg.